The primary structure comprises 1561 residues: ABC-type transporter phomO' (1561 aa).

The next 7 helical transmembrane spans lie at 34–54 (LYFEEVVFVLVPSCVFILLAA), 110–130 (CTAGLLVTLHVAGLILLCTTV), 139–159 (SVPASVVAALAFGVVPVLAHF), 172–192 (SSSLLVGLFLCVAVLLRAPLV), 202–222 (GSALVAVEIASLVLQLVLIAV), 314–334 (LGLYALAPVIPRLCLAGFTLA), and 358–378 (GLIGATFLIYTGIAVSTGWYW). The ABC transmembrane type-1 1 domain occupies 326–599 (LCLAGFTLAQ…LLQIIPSFGA (274 aa)). Asn-384 is a glycosylation site (N-linked (GlcNAc...) asparagine). 4 consecutive transmembrane segments (helical) span residues 428 to 448 (LAYAHELWVAPIETAIGTWML), 452 to 472 (VGPPGLVVLGIIGVCLGTSTY), 535 to 555 (LIVGTLLSSYSTATLAPVLVF), and 577 to 597 (LIWISLLASPLIQLLQIIPSF). An ABC transporter 1 domain is found at 645–871 (IHNSSFSYTD…VEDENGDVDN (227 aa)). N-linked (GlcNAc...) asparagine glycosylation occurs at Asn-647. Residue 678 to 685 (GPAGCGKS) coordinates ATP. Asn-721 carries N-linked (GlcNAc...) asparagine glycosylation. The segment at 853–899 (YQFPPSQADVEDENGDVDNGAENTRPRESSHTTEAQSGPPEPKSKPT) is disordered. Transmembrane regions (helical) follow at residues 913 to 933 (SIGFLNLVLFIGGGIIFAFCL), 969 to 989 (VLPLIAVAGWVAQLMMLIVPL), 1037 to 1054 (LFNTAAALLTGIAQVILI), and 1147 to 1167 (LVLNLVVAGLALVVMGAAVGL). Positions 920-1209 (VLFIGGGIIF…LLTAWTSLET (290 aa)) constitute an ABC transmembrane type-1 2 domain. Residue Asn-1189 is glycosylated (N-linked (GlcNAc...) asparagine). The span at 1229–1238 (DVLVRPDSLD) shows a compositional bias: basic and acidic residues. Residues 1229–1298 (DVLVRPDSLD…DVAADGEKHE (70 aa)) form a disordered region. A compositionally biased stretch (acidic residues) spans 1269-1280 (YDDDDESDENTD). The region spanning 1297–1545 (HEATTITTTS…SDIFAFFGRS (249 aa)) is the ABC transporter 2 domain. Residue 1333–1340 (GRTGSGKS) coordinates ATP. The N-linked (GlcNAc...) asparagine glycan is linked to Asn-1496.

It belongs to the ABC transporter superfamily. ABCC family. Conjugate transporter (TC 3.A.1.208) subfamily.

The protein localises to the membrane. ABC-type transporter; part of the gene cluster that mediates the biosynthesis of the phomopsins, a group of hexapeptide mycotoxins which infects lupins and causes lupinosis disease in livestock. This is ABC-type transporter phomO' from Diaporthe leptostromiformis (Lupinosis disease fungus).